The sequence spans 482 residues: MFS-type transporter traF (482 aa).

Residues 1–14 (MTSGTEQATLNTEE) show a composition bias toward polar residues. The interval 1-22 (MTSGTEQATLNTEENGSDSDHL) is disordered. N-linked (GlcNAc...) asparagine glycosylation is found at Asn-15 and Asn-45. Helical transmembrane passes span 52–72 (VFITACLASLVCISTFGSSVM), 89–109 (LSILATALYVLGFAVGPLLFG), 125–145 (VFLFAIFSIPIAVAKNVATIF), 149–169 (FLCGTFAAAPLAIAGGGLADL), 176–196 (GIAVAGFASATFLGPVLGPLV), 209–229 (WTQWLSIIFSLVFLAIYFVFC), 275–295 (PILALLTLYMGFIYGFLYLCF), 312–332 (IGSLPFLSITVGVLIGVVIII), and 354–374 (LVPMMIGSILMPAGIFWFAWT). An N-linked (GlcNAc...) asparagine glycan is attached at Asn-376. A run of 3 helical transmembrane segments spans residues 379–399 (LPWAPQVVSGVFIGCGILLIF), 427–447 (LLGAGFPLFASYMFDNLGVPW), and 448–468 (AMSLLGFLCVALVPVPFLFFI).

This sequence belongs to the major facilitator superfamily. CAR1 family.

It localises to the membrane. MFS-type transporter; part of the tra gene cluster that produces terrestric acid. The clavatol biosynthesis cluster cla and the terrestric acid cluster tra are both involved in the production of peniphenones and penilactones. The protein is MFS-type transporter traF of Penicillium crustosum (Blue mold fungus).